Consider the following 142-residue polypeptide: Secreted acidic protein 1B (142 aa).

2 stretches are compositionally biased toward acidic residues: residues Ser1–Glu47 and Thr54–Asn64. The interval Ser1–Ser74 is disordered. The Extracellular portion of the chain corresponds to Ser1 to Lys123. Over residues Asp65 to Ser74 the composition is skewed to basic and acidic residues. Residues Gly124–Leu141 traverse the membrane as a helical segment. Residue Leu142 is a topological domain, cytoplasmic.

Component of the acid-insoluble and acid-soluble organic matrix of the aragonitic skeleton (at protein level).

The protein resides in the membrane. This Acropora millepora (Staghorn coral) protein is Secreted acidic protein 1B.